Here is a 291-residue protein sequence, read N- to C-terminus: ATP synthase gamma chain (291 aa).

This sequence belongs to the ATPase gamma chain family. In terms of assembly, F-type ATPases have 2 components, CF(1) - the catalytic core - and CF(0) - the membrane proton channel. CF(1) has five subunits: alpha(3), beta(3), gamma(1), delta(1), epsilon(1). CF(0) has three main subunits: a, b and c.

The protein resides in the cell inner membrane. Its function is as follows. Produces ATP from ADP in the presence of a proton gradient across the membrane. The gamma chain is believed to be important in regulating ATPase activity and the flow of protons through the CF(0) complex. The chain is ATP synthase gamma chain from Ruegeria sp. (strain TM1040) (Silicibacter sp.).